The chain runs to 208 residues: Uracil phosphoribosyltransferase (208 aa).

5-phospho-alpha-D-ribose 1-diphosphate is bound by residues arginine 78, arginine 103, and 130–138; that span reads DPMLATGGT. Uracil is bound by residues isoleucine 193 and 198–200; that span reads GDA. Aspartate 199 serves as a coordination point for 5-phospho-alpha-D-ribose 1-diphosphate.

This sequence belongs to the UPRTase family. Requires Mg(2+) as cofactor.

The catalysed reaction is UMP + diphosphate = 5-phospho-alpha-D-ribose 1-diphosphate + uracil. Its pathway is pyrimidine metabolism; UMP biosynthesis via salvage pathway; UMP from uracil: step 1/1. With respect to regulation, allosterically activated by GTP. In terms of biological role, catalyzes the conversion of uracil and 5-phospho-alpha-D-ribose 1-diphosphate (PRPP) to UMP and diphosphate. The polypeptide is Uracil phosphoribosyltransferase (Desulfotalea psychrophila (strain LSv54 / DSM 12343)).